Reading from the N-terminus, the 498-residue chain is Guanosine-5'-triphosphate,3'-diphosphate pyrophosphatase (498 aa).

It belongs to the GppA/Ppx family. GppA subfamily.

The enzyme catalyses guanosine 3'-diphosphate 5'-triphosphate + H2O = guanosine 3',5'-bis(diphosphate) + phosphate + H(+). It participates in purine metabolism; ppGpp biosynthesis; ppGpp from GTP: step 2/2. Functionally, catalyzes the conversion of pppGpp to ppGpp. Guanosine pentaphosphate (pppGpp) is a cytoplasmic signaling molecule which together with ppGpp controls the 'stringent response', an adaptive process that allows bacteria to respond to amino acid starvation, resulting in the coordinated regulation of numerous cellular activities. The chain is Guanosine-5'-triphosphate,3'-diphosphate pyrophosphatase from Pectobacterium carotovorum subsp. carotovorum (strain PC1).